A 553-amino-acid chain; its full sequence is MSYTTATADSDDGMHSSIHNESPAPDSISNGCRSRGKRSVLKKGPWTSTEDGILIDYVKKHGEGNWNAVQKHTSLARCGKSCRLRWANHLRPNLKKGAFSQEEEQLIVEMHAKMGNKWAQMAEHLPGRTDNEIKNYWNTRIKRRQRAGLPLYPPEIYVDDLHWSEEYTKSNIIRVDRRRRHQDFLQLGNSKDNVLFDDLNFAASLLPAASDLSDLVACNMLGTGASSSRYESYMPPILPSPKQIWESGSRFPMCSSNIKHEFQSPEHFQNTAVQKNPRSCSISPCDVDHHPYENQHSSHMMMVPDSHTVTYGMHPTSKPLFGAVKLELPSFQYSETSAFDQWKTTPSPPHSDLLDSVDAYIQSPPPSQVEESDCFSSCDTGLLDMLLHEAKIKTSAKHSLLMSSPQKSFSSTTCTTNVTQNVPRGSENLIKSGEYEDSQKYLGRSEITSPSQLSAGGFSSAFAGNVVKTEELDQVWEPKRVDITRPDVLLASSWLDQGCYGIVSDTSSMSDALALLGGDDIGNSYVTVGSSSGQAPRGVGSYGWTNMPPVWSL.

The segment at 1–44 (MSYTTATADSDDGMHSSIHNESPAPDSISNGCRSRGKRSVLKKG) is disordered. HTH myb-type domains follow at residues 38 to 90 (RSVL…ANHL) and 91 to 145 (RPNL…KRRQ). 2 consecutive DNA-binding regions (H-T-H motif) follow at residues 66-90 (WNAVQKHTSLARCGKSCRLRWANHL) and 118-141 (WAQMAEHLPGRTDNEIKNYWNTRI).

Mostly expressed in roots (e.g. root tips), stems, pollen, shoot apices, flowers and floral shoot tips, and, to a lower extent, in leaves and siliques.

The protein localises to the nucleus. In terms of biological role, transcriptional activator of alpha-amylase expression that binds to 5'-CAACTGTC-3' motif in target gene promoter. In vegetative tissues, inhibits growth by reducing cell proliferation. Promotes the expression of aleurone-related genes (e.g. CP1, CP, GASA1, BXL1 and BXL2) in seeds. Together with MYB33 and MYB101, promotes the programmed cell death (PCD) the vacuolation of protein storage vacuoles (PSVs) in the aleurone layers during seed germination. Together with MYB33, facilitates anther and tapetum development. This Arabidopsis thaliana (Mouse-ear cress) protein is Transcription factor MYB65.